We begin with the raw amino-acid sequence, 25 residues long: C-reactive protein P2 subunit 4 (25 aa).

In terms of domain architecture, Pentraxin (PTX) spans 1 to 25 (GRSLVFPEETANSFVELFPAKELSL).

It belongs to the pentraxin family. As to quaternary structure, heteropentamer. Discoid arrangement of 5 non-covalently bound subunits 1, 2, 3 and 4. Requires Ca(2+) as cofactor. In terms of processing, glycosylated.

The protein resides in the secreted. Displays several functions associated with host defense: it promotes agglutination, bacterial capsular swelling, phagocytosis, and complement fixation through its calcium-dependent binding to phosphorylcholine. In Gadus morhua (Atlantic cod), this protein is C-reactive protein P2 subunit 4.